We begin with the raw amino-acid sequence, 121 residues long: Basic phospholipase A2 homolog AppP2 (121 aa).

7 disulfides stabilise this stretch: C26–C115, C28–C44, C43–C95, C49–C121, C50–C88, C57–C81, and C75–C86. Residues 105-117 (KKYKAYFKLKCKK) form an important for membrane-damaging activities in eukaryotes and bacteria; heparin-binding region.

The protein belongs to the phospholipase A2 family. Group II subfamily. K49 sub-subfamily. As to quaternary structure, monomer. In terms of tissue distribution, expressed by the venom gland.

It is found in the secreted. In terms of biological role, snake venom phospholipase A2 (PLA2) that lacks enzymatic activity. Displays edema-inducing activities. Is myotoxic. A model of myotoxic mechanism has been proposed: an apo Lys49-PLA2 is activated by the entrance of a hydrophobic molecule (e.g. fatty acid) at the hydrophobic channel of the protein leading to a reorientation of a monomer. This reorientation causes a transition between 'inactive' to 'active' states, causing alignment of C-terminal and membrane-docking sites (MDoS) side-by-side and putting the membrane-disruption sites (MDiS) in the same plane, exposed to solvent and in a symmetric position for both monomers. The MDoS region stabilizes the toxin on membrane by the interaction of charged residues with phospholipid head groups. Subsequently, the MDiS region destabilizes the membrane with penetration of hydrophobic residues. This insertion causes a disorganization of the membrane, allowing an uncontrolled influx of ions (i.e. calcium and sodium), and eventually triggering irreversible intracellular alterations and cell death. The chain is Basic phospholipase A2 homolog AppP2 from Agkistrodon piscivorus piscivorus (Eastern cottonmouth).